The primary structure comprises 212 residues: MSQLGNICHADYMSTSTESQERSLNNPNDTHPEIVNVVSTFQLGVKLELRKIVQKARNAEYNPKRFAGAIMRISSPKSTALIFQTGKIVCTGTRSIEESKIASKKYAKIIKKIGYPIHYSNFNVQNIVGSCDVKFQIALRTLVDSYLAFCQYEPEVFPGLVYRMASPKVTLLVFSTGKVVLTGAKDEESLNLAYKNIYPILLANRKEDISNQ.

Tandem repeats lie at residues 30–114 and 120–201.

The protein belongs to the TBP family. As to quaternary structure, belongs to the TFIID complex together with the TBP-associated factors (TAFs). Binds DNA as monomer.

The protein localises to the nucleus. Functionally, general transcription factor that functions at the core of the DNA-binding multiprotein factor TFIID. Binding of TFIID to the TATA box is the initial transcriptional step of the pre-initiation complex (PIC), playing a role in the activation of eukaryotic genes transcribed by RNA polymerase II. The protein is TATA-box-binding protein 2 of Entamoeba histolytica (strain ATCC 30459 / HM-1:IMSS / ABRM).